A 598-amino-acid chain; its full sequence is Tail knob protein gp9 (598 aa).

This sequence belongs to the picovirinae distal tube protein family. Homohexamer; forms a hexameric tube structure with six flexible hydrophobic loops.

It is found in the virion. Functionally, distal (knob) tail protein that plugs the end of the tube before DNA ejection and forms a channel perforating the host membrane during ejection. The sequence is that of Tail knob protein gp9 (9) from Bacillus subtilis (Bacteriophage B103).